Consider the following 368-residue polypeptide: Cytochrome b (368 aa).

4 consecutive transmembrane segments (helical) span residues 32 to 52 (FGFL…TLAF), 76 to 98 (WEFR…IHMT), 112 to 132 (AWMS…LGYV), and 174 to 194 (FFVL…LHIF). Heme b is bound by residues His82 and His96. His178 and His192 together coordinate heme b. His197 serves as a coordination point for a ubiquinone. The next 4 helical transmembrane spans lie at 219-239 (MLMT…LQAA), 285-305 (GLLV…IRAL), 323-343 (GWVI…SAIP), and 347-367 (YILY…VLCL).

Belongs to the cytochrome b family. The main subunits of complex b-c1 are: cytochrome b, cytochrome c1 and the Rieske protein. It depends on heme b as a cofactor.

Its subcellular location is the mitochondrion inner membrane. Component of the ubiquinol-cytochrome c reductase complex (complex III or cytochrome b-c1 complex) that is part of the mitochondrial respiratory chain. The b-c1 complex mediates electron transfer from ubiquinol to cytochrome c. Contributes to the generation of a proton gradient across the mitochondrial membrane that is then used for ATP synthesis. This chain is Cytochrome b (MT-CYB), found in Toxoplasma gondii.